Reading from the N-terminus, the 652-residue chain is Acetyl-coenzyme A synthetase (652 aa).

Residues 191–194 (RAGR), Thr-311, and Asn-335 contribute to the CoA site. Residues 387-389 (GEP), 411-416 (DTWWQT), Asp-500, and Arg-515 contribute to the ATP site. Ser-523 provides a ligand contact to CoA. Arg-526 lines the ATP pocket. Mg(2+)-binding residues include Val-537, His-539, and Ile-542. Residue Arg-584 participates in CoA binding. Lys-609 carries the post-translational modification N6-acetyllysine.

This sequence belongs to the ATP-dependent AMP-binding enzyme family. Mg(2+) serves as cofactor. Acetylated. Deacetylation by the SIR2-homolog deacetylase activates the enzyme.

The catalysed reaction is acetate + ATP + CoA = acetyl-CoA + AMP + diphosphate. Its function is as follows. Catalyzes the conversion of acetate into acetyl-CoA (AcCoA), an essential intermediate at the junction of anabolic and catabolic pathways. Acs undergoes a two-step reaction. In the first half reaction, Acs combines acetate with ATP to form acetyl-adenylate (AcAMP) intermediate. In the second half reaction, it can then transfer the acetyl group from AcAMP to the sulfhydryl group of CoA, forming the product AcCoA. Enables the cell to use acetate during aerobic growth to generate energy via the TCA cycle, and biosynthetic compounds via the glyoxylate shunt. Acetylates CheY, the response regulator involved in flagellar movement and chemotaxis. In Cronobacter sakazakii (strain ATCC BAA-894) (Enterobacter sakazakii), this protein is Acetyl-coenzyme A synthetase.